Here is a 298-residue protein sequence, read N- to C-terminus: Foldase protein PrsA 1 (298 aa).

The signal sequence occupies residues methionine 1–glycine 19. Cysteine 20 carries the N-palmitoyl cysteine lipid modification. Residue cysteine 20 is the site of S-diacylglycerol cysteine attachment. Residues glutamate 136–lysine 232 form the PpiC domain.

This sequence belongs to the PrsA family.

It localises to the cell membrane. The enzyme catalyses [protein]-peptidylproline (omega=180) = [protein]-peptidylproline (omega=0). Plays a major role in protein secretion by helping the post-translocational extracellular folding of several secreted proteins. In Lactiplantibacillus plantarum (strain ATCC BAA-793 / NCIMB 8826 / WCFS1) (Lactobacillus plantarum), this protein is Foldase protein PrsA 1 (prsA1).